A 295-amino-acid chain; its full sequence is Mitochondrial dicarboxylate transporter (295 aa).

Solcar repeat units lie at residues 4–88 (KQVK…LKEH), 96–188 (TNMW…FKNF), and 198–286 (KKNS…LKKY). Helical transmembrane passes span 8–24 (YPWW…VMNT), 63–82 (GLSA…FGMY), 98–122 (MWYL…ADLI), 163–182 (GWKP…VVTY), 204–224 (LTSS…ADVI), and 262–280 (WVPS…FFAM).

The protein belongs to the mitochondrial carrier (TC 2.A.29) family. Homodimer.

The protein localises to the mitochondrion inner membrane. Functionally, mitochondrial dicarboxylic transporter catalyzing the exchange of dicarboxylic acids like malate and succinate for inorganic phosphate. Required for growth on ethanol and acetate. The polypeptide is Mitochondrial dicarboxylate transporter (DIC1) (Candida glabrata (strain ATCC 2001 / BCRC 20586 / JCM 3761 / NBRC 0622 / NRRL Y-65 / CBS 138) (Yeast)).